The sequence spans 457 residues: tRNA modification GTPase MnmE (457 aa).

Residues R22, E83, and R122 each contribute to the (6S)-5-formyl-5,6,7,8-tetrahydrofolate site. Residues 219–378 (GLATAIIGRP…LEEAIKALFF (160 aa)) form the TrmE-type G domain. Residue N229 coordinates K(+). GTP contacts are provided by residues 229-234 (NVGKSS), 248-254 (TDIAGTT), and 273-276 (DTAG). A Mg(2+)-binding site is contributed by S233. Residues T248, I250, and T253 each coordinate K(+). T254 contacts Mg(2+). Residue K457 participates in (6S)-5-formyl-5,6,7,8-tetrahydrofolate binding.

It belongs to the TRAFAC class TrmE-Era-EngA-EngB-Septin-like GTPase superfamily. TrmE GTPase family. Homodimer. Heterotetramer of two MnmE and two MnmG subunits. The cofactor is K(+).

It localises to the cytoplasm. Functionally, exhibits a very high intrinsic GTPase hydrolysis rate. Involved in the addition of a carboxymethylaminomethyl (cmnm) group at the wobble position (U34) of certain tRNAs, forming tRNA-cmnm(5)s(2)U34. In Listeria innocua serovar 6a (strain ATCC BAA-680 / CLIP 11262), this protein is tRNA modification GTPase MnmE.